A 113-amino-acid polypeptide reads, in one-letter code: uncharacterized protein (113 aa).

This is an uncharacterized protein from Escherichia coli (strain K12).